The chain runs to 154 residues: uncharacterized protein (154 aa).

This is an uncharacterized protein from Aquifex aeolicus (strain VF5).